The primary structure comprises 605 residues: Sodium-independent sulfate anion transporter (605 aa).

Topologically, residues 1–50 (MPSSLKGLGQAWLSSSSMALSACCSVSAWQKRLPVLAWLPRYSLQWLKMD) are extracellular. A helical membrane pass occupies residues 51 to 71 (FIAGLSVGLTVIPQALAYAEV). Position 72 (Ala-72) is a topological domain, cytoplasmic. The helical transmembrane segment at 73–93 (GLPPQYGLYSAFTGCFVYVFL) threads the bilayer. Over 94-98 (GTSRD) the chain is Extracellular. Residues 99–119 (VTLGPTAIMSLLVSFYTFHEP) traverse the membrane as a helical segment. Topologically, residues 120-122 (AYA) are cytoplasmic. Residues 123–143 (VLLTFLSGCIQLAMGLLHLGF) traverse the membrane as a helical segment. The Extracellular portion of the chain corresponds to 144–146 (LLD). The helical transmembrane segment at 147–167 (FISCPVIKGFTSAAAIIIGFG) threads the bilayer. Residues 168 to 196 (QIKNLLGLHNIPRQFFLQVYHTFLSVGET) are Cytoplasmic-facing. A helical transmembrane segment spans residues 197 to 217 (RLGDAILGLVCMVLLLVLKLM). Over 218–249 (RDRIPPVHPEMPLCVRLSCGLVWTTATARNAL) the chain is Extracellular. Residues 250–270 (VVSFAALVAYSFEVTGYQPFI) traverse the membrane as a helical segment. Residues 271–303 (LTGEIAKGLPPVRVPPFSVTMANGTVSFTRMVQ) lie on the Cytoplasmic side of the membrane. A helical membrane pass occupies residues 304–324 (DLGAGLAVVPLIGLLESIAVA). Residues 325-340 (KAFASQNDYHVDANQE) are Extracellular-facing. The chain crosses the membrane as a helical span at residues 341–361 (LLAIGLTNMLGSFVSSYPITG). The Cytoplasmic segment spans residues 362-373 (SFGRTAVNAQSG). The chain crosses the membrane as a helical span at residues 374–394 (VCTPAGGLVTGALVLLSLDYL). At 395–397 (TSL) the chain is on the extracellular side. The helical transmembrane segment at 398-418 (FYYIPKAALAAVIIMAVVPLF) threads the bilayer. At 419–447 (DTKIFGMLWRVKRLDLLPLCATFLLCFWE) the chain is on the cytoplasmic side. Residues 448-468 (VQYGILAGTLVSTLFLLHFVA) form a helical membrane-spanning segment. The Extracellular segment spans residues 469 to 605 (RPKTQVSEGP…PEHKVTLLTA (137 aa)). Positions 479–582 (VLILQLASGL…EKAEQYVRQE (104 aa)) constitute an STAS domain.

It belongs to the SLC26A/SulP transporter (TC 2.A.53) family.

The protein resides in the cell membrane. Its subcellular location is the lysosome membrane. The protein localises to the apical cell membrane. It is found in the basolateral cell membrane. It carries out the reaction hydrogencarbonate(in) + chloride(out) = hydrogencarbonate(out) + chloride(in). The enzyme catalyses sulfate(in) + H(+)(in) = sulfate(out) + H(+)(out). The catalysed reaction is oxalate(in) + chloride(out) = oxalate(out) + chloride(in). In terms of biological role, sodium-independent anion exchanger mediating bicarbonate, chloride, sulfate and oxalate transport. Exhibits sodium-independent sulfate anion transporter activity that may cooperate with SLC26A2 to mediate DIDS-sensitive sulfate uptake into high endothelial venules endothelial cells (HEVEC). In the kidney, mediates chloride-bicarbonate exchange, facilitating V-ATPase-mediated acid secretion. May function as a chloride channel, playing an important role in moderating chloride homeostasis and neuronal activity in the cerebellum. The protein is Sodium-independent sulfate anion transporter (Slc26a11) of Cavia porcellus (Guinea pig).